The chain runs to 168 residues: Photosystem I assembly protein Ycf3 (168 aa).

3 TPR repeats span residues 35-68 (AFAYYINGMSAQSEGNYAEALQNYYQAMHLEMDP), 72-105 (SYILYNIGIIHTSNGEHSKALEYYCRAIERNPFL), and 120-153 (GEQAIQQGDSEIAEAWFDQAAEYWKQARTLTPDN).

Belongs to the Ycf3 family.

It localises to the plastid membrane. In terms of biological role, essential for the assembly of the photosystem I (PSI) complex. May act as a chaperone-like factor to guide the assembly of the PSI subunits. In Cuscuta obtusiflora (Peruvian dodder), this protein is Photosystem I assembly protein Ycf3.